A 352-amino-acid chain; its full sequence is MVFRIASSPYTHNQRQTSRIMLLVLLAAVPGIAAQLWFFGWGTLVQILLASVSTLLAEALVLKLRKQSVAATLKDNSALLTGLLLAVSIPPLAPWWMVVLGTVFAVIIAKQLYGGLGQNPFNPAMIGYVVLLISFPVQMTSWLPPHEIAVNIPGFIDAIQVIFSGHTASGGDMNTLRLGIDGISQATPLDTFKTSVRAGHSVEQIMQYPIYSGILAGAGWQWVNLAWLAGGLWLLWQKAIRWHIPLSFLVTLALCATLGWLFSPETLAAPQIHLLSGATMLGAFFILTDPVTASTTNRGRLIFGALAGLLVWLIRSFGGYPDGVAFAVLLANITVPLIDYYTRPRVYGHRKG.

4 helical membrane passes run 20 to 40 (IMLLVLLAAVPGIAAQLWFFG), 42 to 62 (GTLVQILLASVSTLLAEALVL), 89 to 109 (IPPLAPWWMVVLGTVFAVIIA), and 123 to 143 (PAMIGYVVLLISFPVQMTSWL). At Thr-187 the chain carries FMN phosphoryl threonine. Helical transmembrane passes span 214-234 (ILAGAGWQWVNLAWLAGGLWL), 242-262 (WHIPLSFLVTLALCATLGWLF), 267-287 (LAAPQIHLLSGATMLGAFFIL), 301-321 (LIFGALAGLLVWLIRSFGGYP), and 322-342 (DGVAFAVLLANITVPLIDYYT).

It belongs to the NqrB/RnfD family. In terms of assembly, the complex is composed of six subunits: RsxA, RsxB, RsxC, RsxD, RsxE and RsxG. FMN serves as cofactor.

The protein resides in the cell inner membrane. Part of a membrane-bound complex that couples electron transfer with translocation of ions across the membrane. Required to maintain the reduced state of SoxR. The protein is Ion-translocating oxidoreductase complex subunit D of Shigella sonnei (strain Ss046).